Reading from the N-terminus, the 228-residue chain is Phosphoenolpyruvate guanylyltransferase (228 aa).

3 residues coordinate phosphoenolpyruvate: T148, G164, and S167.

Belongs to the CofC family.

It catalyses the reaction phosphoenolpyruvate + GTP + H(+) = enolpyruvoyl-2-diphospho-5'-guanosine + diphosphate. It participates in cofactor biosynthesis; coenzyme F420 biosynthesis. Guanylyltransferase that catalyzes the activation of phosphoenolpyruvate (PEP) as enolpyruvoyl-2-diphospho-5'-guanosine, via the condensation of PEP with GTP. It is involved in the biosynthesis of coenzyme F420, a hydride carrier cofactor. The polypeptide is Phosphoenolpyruvate guanylyltransferase (Thermomonospora curvata (strain ATCC 19995 / DSM 43183 / JCM 3096 / KCTC 9072 / NBRC 15933 / NCIMB 10081 / Henssen B9)).